We begin with the raw amino-acid sequence, 304 residues long: Lipid droplet-associated triacylglycerol lipase (304 aa).

Residues 1–155 (MTVKEYTKSK…MGIKMTAALR (155 aa)) are Lumenal-facing. N-linked (GlcNAc...) asparagine glycosylation is present at N95. A GXSXG motif is present at residues 107–111 (GHSVG). The active-site Nucleophile is S109. The stretch at 156 to 176 (YIPPLAHVVSLFSYIFFYWIL) is an intramembrane region. Residues 177-304 (SEGFSRFIID…HAEYAINAFF (128 aa)) are Lumenal-facing.

It belongs to the AB hydrolase superfamily. LDAH family.

Its subcellular location is the lipid droplet. It localises to the membrane. It carries out the reaction a triacylglycerol + H2O = a diacylglycerol + a fatty acid + H(+). Its function is as follows. Shows both triacylglycerol (TAG) lipase and ester hydrolase activities. May play a role in TAG homeostasis. The protein is Lipid droplet-associated triacylglycerol lipase of Saccharomyces cerevisiae (strain ATCC 204508 / S288c) (Baker's yeast).